We begin with the raw amino-acid sequence, 213 residues long: Uridine kinase (213 aa).

ATP is bound at residue 15–22 (GASASGKS).

It belongs to the uridine kinase family.

Its subcellular location is the cytoplasm. The catalysed reaction is uridine + ATP = UMP + ADP + H(+). It carries out the reaction cytidine + ATP = CMP + ADP + H(+). It functions in the pathway pyrimidine metabolism; CTP biosynthesis via salvage pathway; CTP from cytidine: step 1/3. The protein operates within pyrimidine metabolism; UMP biosynthesis via salvage pathway; UMP from uridine: step 1/1. This chain is Uridine kinase, found in Yersinia enterocolitica serotype O:8 / biotype 1B (strain NCTC 13174 / 8081).